Consider the following 142-residue polypeptide: NADH-quinone oxidoreductase subunit A 2 (142 aa).

The next 3 helical transmembrane spans lie at 18–38 (FLPLALYTLAASILIGVLLLA), 73–93 (FYLIAIFFIVFDVEAAFIFAW), and 104–124 (GLVHITFFIVILLLGLVWLWL).

Belongs to the complex I subunit 3 family. NDH-1 is composed of 14 different subunits. Subunits NuoA, H, J, K, L, M, N constitute the membrane sector of the complex.

Its subcellular location is the cell inner membrane. It carries out the reaction a quinone + NADH + 5 H(+)(in) = a quinol + NAD(+) + 4 H(+)(out). NDH-1 shuttles electrons from NADH, via FMN and iron-sulfur (Fe-S) centers, to quinones in the respiratory chain. The immediate electron acceptor for the enzyme in this species is believed to be ubiquinone. Couples the redox reaction to proton translocation (for every two electrons transferred, four hydrogen ions are translocated across the cytoplasmic membrane), and thus conserves the redox energy in a proton gradient. The chain is NADH-quinone oxidoreductase subunit A 2 from Geobacter sulfurreducens (strain ATCC 51573 / DSM 12127 / PCA).